A 259-amino-acid polypeptide reads, in one-letter code: 1,2-dihydroxy-1,2-dihydronaphthalene dehydrogenase (259 aa).

NAD(+) is bound at residue 8 to 32; sequence SITGAGSGIGLELVRSFKSAGYYVS. Ser140 contacts substrate. Tyr153 functions as the Proton acceptor in the catalytic mechanism.

The protein belongs to the short-chain dehydrogenases/reductases (SDR) family.

The enzyme catalyses (1R,2S)-1,2-dihydronaphthalene-1,2-diol + NAD(+) = naphthalene-1,2-diol + NADH + H(+). It catalyses the reaction cis-1,2-dihydroxy-1,2-dihydrodibenzothiophene + NAD(+) = 1,2-dihydroxydibenzothiophene + NADH + H(+). It functions in the pathway aromatic compound metabolism; naphthalene degradation. Its function is as follows. Catalyzes the oxidation of naphthalene dihydrodiol into 1,2-dihydroxynaphthalene. The chain is 1,2-dihydroxy-1,2-dihydronaphthalene dehydrogenase (nahB) from Pseudomonas putida (Arthrobacter siderocapsulatus).